The following is a 122-amino-acid chain: Large ribosomal subunit protein uL14c (122 aa).

It belongs to the universal ribosomal protein uL14 family. In terms of assembly, part of the 50S ribosomal subunit.

The protein localises to the plastid. It is found in the chloroplast. Binds to 23S rRNA. In Bigelowiella natans (Pedinomonas minutissima), this protein is Large ribosomal subunit protein uL14c (rpl14).